Consider the following 312-residue polypeptide: Pantothenate kinase (312 aa).

Residue 97 to 104 (GSVAVGKS) participates in ATP binding.

It belongs to the prokaryotic pantothenate kinase family.

The protein resides in the cytoplasm. It carries out the reaction (R)-pantothenate + ATP = (R)-4'-phosphopantothenate + ADP + H(+). The protein operates within cofactor biosynthesis; coenzyme A biosynthesis; CoA from (R)-pantothenate: step 1/5. The chain is Pantothenate kinase from Mycolicibacterium vanbaalenii (strain DSM 7251 / JCM 13017 / BCRC 16820 / KCTC 9966 / NRRL B-24157 / PYR-1) (Mycobacterium vanbaalenii).